The primary structure comprises 63 residues: Large ribosomal subunit protein uL29 (63 aa).

Belongs to the universal ribosomal protein uL29 family.

The chain is Large ribosomal subunit protein uL29 from Shewanella baltica (strain OS223).